Reading from the N-terminus, the 354-residue chain is Methionine import ATP-binding protein MetN (354 aa).

Positions 8-250 (LDHIDITFRQ…PKEALTQKFI (243 aa)) constitute an ABC transporter domain. 42–49 (GYSGAGKS) lines the ATP pocket.

Belongs to the ABC transporter superfamily. Methionine importer (TC 3.A.1.24) family. The complex is composed of two ATP-binding proteins (MetN), two transmembrane proteins (MetI) and a solute-binding protein (MetQ).

It is found in the cell membrane. The enzyme catalyses L-methionine(out) + ATP + H2O = L-methionine(in) + ADP + phosphate + H(+). It catalyses the reaction D-methionine(out) + ATP + H2O = D-methionine(in) + ADP + phosphate + H(+). Its function is as follows. Part of the ABC transporter complex MetNIQ involved in methionine import. Responsible for energy coupling to the transport system. This Streptococcus pyogenes serotype M6 (strain ATCC BAA-946 / MGAS10394) protein is Methionine import ATP-binding protein MetN.